We begin with the raw amino-acid sequence, 419 residues long: Cytosine permease (419 aa).

Residues 1–19 (MSQDNNFSQGPVPQSARKG) lie on the Cytoplasmic side of the membrane. A helical transmembrane segment spans residues 20–39 (VLALTFVMLGLTFFSASMWT). Topologically, residues 40 to 51 (GGTLGTGLSYHD) are periplasmic. Residues 52-71 (FFLAVLIGNLLLGIYTSFLG) traverse the membrane as a helical segment. Residues 72-100 (YIGAKTGLTTHLLARFSFGVKGSWLPSLL) lie on the Cytoplasmic side of the membrane. A helical transmembrane segment spans residues 101-120 (LGGTQVGWFGVGVAMFAIPV). The Periplasmic portion of the chain corresponds to 121-127 (GKATGLD). A helical membrane pass occupies residues 128-147 (INLLIAVSGLLMTVTVFFGI). Topologically, residues 148 to 152 (SALTV) are cytoplasmic. A helical transmembrane segment spans residues 153–172 (LSVIAVPAIACLGGYSVWLA). Over 173 to 192 (VNGMGGLDALKAVVPAQPLD) the chain is Periplasmic. Residues 193 to 212 (FNVALALVVGSFISAGTLTA) traverse the membrane as a helical segment. The Cytoplasmic segment spans residues 213–221 (DFVRFGRNA). A helical membrane pass occupies residues 222 to 242 (KLAVLVAMVAFFLGNSLMFIF). The Periplasmic portion of the chain corresponds to 243-257 (GAAGAAALGMADISD). The helical transmembrane segment at 258 to 277 (VMIAQGLLLPAIVVLGLNIW) threads the bilayer. Over 278 to 300 (TTNDNALYASGLGFANITGMSSK) the chain is Cytoplasmic. A helical transmembrane segment spans residues 301-320 (TLSVINGIIGTVCALWLYNN). Residue Phe-321 is a topological domain, periplasmic. The chain crosses the membrane as a helical span at residues 322–341 (VGWLTFLSAAIPPVGGVIIA). Residues 342–358 (DYLMNRRRYEHFATTRM) lie on the Cytoplasmic side of the membrane. A helical membrane pass occupies residues 359–378 (MSVNWVAILAVALGIAAGHW). Topologically, residues 379-380 (LP) are periplasmic. A helical membrane pass occupies residues 381 to 400 (GIVPVNAVLGGALSYLILNP). Residues 401–419 (ILNRKTTAAMTHVEANSVE) lie on the Cytoplasmic side of the membrane.

It belongs to the purine-cytosine permease (2.A.39) family.

The protein localises to the cell inner membrane. In terms of biological role, required for cytosine transport into the cell. This chain is Cytosine permease (codB), found in Escherichia coli O6:H1 (strain CFT073 / ATCC 700928 / UPEC).